The sequence spans 56 residues: Ribosome biogenesis protein Nop10 (56 aa).

This sequence belongs to the NOP10 family.

Involved in ribosome biogenesis; more specifically in 18S rRNA pseudouridylation and in cleavage of pre-rRNA. The protein is Ribosome biogenesis protein Nop10 of Methanococcoides burtonii (strain DSM 6242 / NBRC 107633 / OCM 468 / ACE-M).